Reading from the N-terminus, the 278-residue chain is Para-Rep C1 (278 aa).

A CRESS-DNA virus Rep endonuclease domain is found at 1 to 95; that stretch reads MACSNWVFTR…VAGPWSYGDL (95 aa). The RCR-1 motif lies at 8-11; it reads FTRN. E33 and H39 together coordinate a divalent metal cation. The short motif at 39 to 41 is the RCR-2 element; it reads HIQ. The Nuclear localization signal motif lies at 48–69; the sequence is KKARFSTVKEIIGGNPHVEKMK. The For DNA cleavage activity role is filled by Y78. An RCR-3 motif is present at residues 78–81; it reads YVQK. E83 is a binding site for a divalent metal cation. Residues 95–101 carry the Nuclear localization signal motif; sequence LLKRGSH. An ATP-binding site is contributed by 176–178; the sequence is GKS.

Belongs to the nanoviridea/circoviridae replication-associated protein family. In terms of assembly, homooligomer (Potential). Rep binds to repeated DNA motifs (iterons). Requires Mg(2+) as cofactor. Mn(2+) is required as a cofactor.

It is found in the host nucleus. The catalysed reaction is ATP + H2O = ADP + phosphate + H(+). Initiates and terminates the replication only of its own subviral DNA molecule. The closed circular ssDNA genome is first converted to a superhelical dsDNA. Rep binds a specific hairpin at the genome origin of replication. Introduces an endonucleolytic nick within the intergenic region of the genome, thereby initiating the rolling circle replication (RCR). Following cleavage, binds covalently to the 5'-phosphate of DNA as a tyrosyl ester. The cleavage gives rise to a free 3'-OH that serves as a primer for the cellular DNA polymerase. The polymerase synthesizes the (+) strand DNA by rolling circle mechanism. After one round of replication, a Rep-catalyzed nucleotidyl transfer reaction releases a circular single-stranded virus genome, thereby terminating the replication. Displays origin-specific DNA cleavage, nucleotidyl transferase, ATPase and helicase activities. This is Para-Rep C1 (C1) from Faba bean necrotic yellows C1 alphasatellite (FBNYC1A).